We begin with the raw amino-acid sequence, 812 residues long: DNA translocase FtsK 1 (812 aa).

Residues 1 to 11 (MTEKSHKKTAK) show a composition bias toward basic residues. Positions 1-36 (MTEKSHKKTAKGRAGSPSPTSARNKKADNGARGNKV) are disordered. A compositionally biased stretch (basic and acidic residues) spans 25–36 (KKADNGARGNKV). The next 5 membrane-spanning stretches (helical) occupy residues 63 to 83 (IGDALWLMGLAATLYLVISLI), 116 to 136 (VGYYLFGWSFWWWIAAACVML), 156 to 176 (IAAAALFVLTVFSPVLEYFVL), 184 to 204 (LPVGAGGMVGIRVGAVFAWLL), and 210 to 230 (LLIILVVLLLSLSLLVQISWL). Residues 231 to 812 (EFLNGAGRAV…RKILAHKDHL (582 aa)) are Cytoplasmic-facing. Residues 461 to 670 (GTPVVGDLAK…FTVQSKIDSR (210 aa)) form the FtsK domain. 481 to 486 (GSGKSV) provides a ligand contact to ATP.

It belongs to the FtsK/SpoIIIE/SftA family. In terms of assembly, homohexamer. Forms a ring that surrounds DNA.

The protein resides in the cell inner membrane. In terms of biological role, essential cell division protein that coordinates cell division and chromosome segregation. The N-terminus is involved in assembly of the cell-division machinery. The C-terminus functions as a DNA motor that moves dsDNA in an ATP-dependent manner towards the dif recombination site, which is located within the replication terminus region. Translocation stops specifically at Xer-dif sites, where FtsK interacts with the Xer recombinase, allowing activation of chromosome unlinking by recombination. FtsK orienting polar sequences (KOPS) guide the direction of DNA translocation. FtsK can remove proteins from DNA as it translocates, but translocation stops specifically at XerCD-dif site, thereby preventing removal of XerC and XerD from dif. The polypeptide is DNA translocase FtsK 1 (ftsK1) (Neisseria meningitidis serogroup A / serotype 4A (strain DSM 15465 / Z2491)).